The chain runs to 116 residues: Large ribosomal subunit protein uL22c (116 aa).

It belongs to the universal ribosomal protein uL22 family. Part of the 50S ribosomal subunit.

The protein resides in the plastid. The protein localises to the chloroplast. This protein binds specifically to 23S rRNA. In terms of biological role, the globular domain of the protein is located near the polypeptide exit tunnel on the outside of the subunit, while an extended beta-hairpin is found that lines the wall of the exit tunnel in the center of the 70S ribosome. This is Large ribosomal subunit protein uL22c (rpl22) from Psilotum nudum (Whisk fern).